We begin with the raw amino-acid sequence, 443 residues long: Protoheme IX farnesyltransferase, mitochondrial (443 aa).

The next 7 helical transmembrane spans lie at 174–194 (AAGF…LTSV), 235–255 (LAVS…TLGV), 257–277 (PLTG…YTPL), 280–300 (ISIA…VMGW), 309–329 (AGAF…FNAL), 364–384 (LLVL…FPIM), and 411–431 (LFFC…TCKR).

This sequence belongs to the UbiA prenyltransferase family.

The protein localises to the mitochondrion membrane. It catalyses the reaction heme b + (2E,6E)-farnesyl diphosphate + H2O = Fe(II)-heme o + diphosphate. Its function is as follows. Converts protoheme IX and farnesyl diphosphate to heme O. The protein is Protoheme IX farnesyltransferase, mitochondrial (COX10) of Pongo abelii (Sumatran orangutan).